The chain runs to 148 residues: Cuticle protein CP1499 (148 aa).

In terms of tissue distribution, calcified shell.

This is Cuticle protein CP1499 from Cancer pagurus (Rock crab).